The chain runs to 212 residues: MHFTQFMGQASVEQDTFGSSGFTRINVGRNTDITVQINRGFTSHFNRLSKLEAEVREGFVGFSHAVYFFTFFHGAATAFCGINQLIGQAQIHGFFATLAGCIAHPAHCQGQTAGRTNLNRNLVVSTTNTAAFHFHDGFGIVDGFVKHFDCLFALYFLGSLLQSTIHDALVNRFFTVNHQGIHKLGQFNAAELRIRQYVALRDFSTSWHFNFL.

It localises to the secreted. Induces agglutination of neuraminidase-treated erythrocytes. This Eikenella corrodens protein is Hemagglutinin 2 (hag2).